The chain runs to 559 residues: Formate--tetrahydrofolate ligase (559 aa).

68 to 75 (TPAGEGKS) contacts ATP.

Belongs to the formate--tetrahydrofolate ligase family.

The enzyme catalyses (6S)-5,6,7,8-tetrahydrofolate + formate + ATP = (6R)-10-formyltetrahydrofolate + ADP + phosphate. It participates in one-carbon metabolism; tetrahydrofolate interconversion. The protein is Formate--tetrahydrofolate ligase of Bacillus licheniformis (strain ATCC 14580 / DSM 13 / JCM 2505 / CCUG 7422 / NBRC 12200 / NCIMB 9375 / NCTC 10341 / NRRL NRS-1264 / Gibson 46).